Here is a 465-residue protein sequence, read N- to C-terminus: Glutamate--tRNA ligase (465 aa).

The 'HIGH' region motif lies at 8-18 (PSPTGDLHIGG). The short motif at 235 to 239 (RLSKR) is the 'KMSKS' region element. Residue K238 coordinates ATP.

It belongs to the class-I aminoacyl-tRNA synthetase family. Glutamate--tRNA ligase type 1 subfamily. In terms of assembly, monomer.

It localises to the cytoplasm. The enzyme catalyses tRNA(Glu) + L-glutamate + ATP = L-glutamyl-tRNA(Glu) + AMP + diphosphate. Its function is as follows. Catalyzes the attachment of glutamate to tRNA(Glu) in a two-step reaction: glutamate is first activated by ATP to form Glu-AMP and then transferred to the acceptor end of tRNA(Glu). The chain is Glutamate--tRNA ligase from Dichelobacter nodosus (strain VCS1703A).